Here is a 152-residue protein sequence, read N- to C-terminus: tRNA-specific adenosine deaminase (152 aa).

Residues 2–111 (AERTHFMELA…AQDPKGGAVE (110 aa)) form the CMP/dCMP-type deaminase domain. A Zn(2+)-binding site is contributed by H53. E55 acts as the Proton donor in catalysis. Zn(2+)-binding residues include C83 and C86.

Belongs to the cytidine and deoxycytidylate deaminase family. As to quaternary structure, homodimer. It depends on Zn(2+) as a cofactor.

The catalysed reaction is adenosine(34) in tRNA + H2O + H(+) = inosine(34) in tRNA + NH4(+). In terms of biological role, catalyzes the deamination of adenosine to inosine at the wobble position 34 of tRNA(Arg2). The sequence is that of tRNA-specific adenosine deaminase from Agrobacterium fabrum (strain C58 / ATCC 33970) (Agrobacterium tumefaciens (strain C58)).